The sequence spans 1046 residues: RNA2 polyprotein (1046 aa).

Residues 62-84 form a hydrophobic region; the sequence is YLYFCLTRYCCLYFFLLLLADWF. The tract at residues 409–415 is involved in tubule formation by the movement protein; it reads LKYSISG. N-acetylmethionine; by host is present on Met-460.

As to quaternary structure, interacts with the large capsid protein. Interacts with the mature small capsid protein. Homomultimer; assembles as pentons. Interacts with the movement protein (via C-terminus). In terms of assembly, interacts (via C-terminus) with the large capsid protein. Specific enzymatic cleavages by picornain 3C-like protease in vivo yield mature proteins. In terms of processing, the C-terminal 24 amino acids of the small capsid protein are specifically cleaved by the RNA1 encoded picornain 3C-like protease during maturation. Post-translationally, not glycosylated.

It localises to the host nucleus. It is found in the host cell junction. Its subcellular location is the host plasmodesma. The protein resides in the virion. Functionally, responsible for viral RNA2 accumulation. May function by recruiting the RNA1-encoded polyprotein that contains the replication protein to RNA2 and enable its replication. In terms of biological role, transports the viral genome to neighboring plant cells directly through plasmosdesmata, without any budding. The movement protein allows efficient cell to cell propagation, by bypassing the host cell wall barrier. Acts by forming a tubular structure at the host plasmodesmata, enlarging it enough to allow free passage of virion capsids. Binds to GTP and to single-stranded RNA and single-stranded DNA in a non-sequence-specific manner. Together with the mature small capsid protein, forms an icosahedral capsid (T=3) enclosing the viral positive strand RNA genome, with a diameter of approximately 300 Angstroms. The capsid is formed from 60 copies each of the large and the small capsid protein. The large capsid protein interacts with the viral RNA. Its function is as follows. Together with the large capsid protein, forms an icosahedral capsid (T=3) enclosing the viral positive strand RNA genome, with a diameter of approximately 300 Angstroms. The capsid is formed from 60 copies each of the large and the small capsid protein. The mature small capsid protein forms the turrets at the fivefold axes of the viral particle. Functionally, the cleavable C-terminus of small capsid protein seems to be involved in viral assembly and RNA packaging. After virus assembly, these amino acids are cleaved off during the normal maturation of the virus. Also seems to act as suppressor of post-transcriptional gene silencing (PTGS), a mechanism of plant viral defense that limits the accumulation of viral RNAs. In terms of biological role, acts as a suppressor of RNA-mediated gene silencing, also known as post-transcriptional gene silencing (PTGS), a mechanism of plant viral defense that limits the accumulation of viral RNAs. The sequence is that of RNA2 polyprotein from Cajanus cajan (Pigeon pea).